Consider the following 193-residue polypeptide: MSNPTLTFVTGNANKLREVQQIFSLTPNFPYELTNKDLDLPEIQGTTRDVAQAKCAAAAKALGGACITEDTALGFHALGGLPGPYIKDFMKTIGHDGLNKMLDGFEDRTASAICTFAYCAGPDEQVHLFEGRTEGVIVPPRGPTHFGWDPILEIKGTGLTYAEMDPKQKNTLSHRYKALTLLQDYLVGLSKQN.

ITP is bound at residue 10-15 (TGNANK). Glu42 serves as a coordination point for Mg(2+). ITP is bound by residues Lys54, 70-71 (DT), Lys87, 146-149 (FGWD), Lys169, and 174-175 (HR).

The protein belongs to the HAM1 NTPase family. In terms of assembly, homodimer. The cofactor is Mg(2+). Mn(2+) is required as a cofactor.

The protein resides in the cytoplasm. Its subcellular location is the nucleus. The catalysed reaction is ITP + H2O = IMP + diphosphate + H(+). It catalyses the reaction dITP + H2O = dIMP + diphosphate + H(+). The enzyme catalyses XTP + H2O = XMP + diphosphate + H(+). Functionally, pyrophosphatase that hydrolyzes non-canonical purine nucleotides such as inosine triphosphate (ITP), deoxyinosine triphosphate (dITP) or xanthosine 5'-triphosphate (XTP) to their respective monophosphate derivatives. The enzyme does not distinguish between the deoxy- and ribose forms. Probably excludes non-canonical purines from RNA and DNA precursor pools, thus preventing their incorporation into RNA and DNA and avoiding chromosomal lesions. This chain is Inosine triphosphate pyrophosphatase, found in Mycosarcoma maydis (Corn smut fungus).